We begin with the raw amino-acid sequence, 121 residues long: Large ribosomal subunit protein uL18 (121 aa).

It belongs to the universal ribosomal protein uL18 family. In terms of assembly, part of the 50S ribosomal subunit; part of the 5S rRNA/L5/L18/L25 subcomplex. Contacts the 5S and 23S rRNAs.

In terms of biological role, this is one of the proteins that bind and probably mediate the attachment of the 5S RNA into the large ribosomal subunit, where it forms part of the central protuberance. This is Large ribosomal subunit protein uL18 from Streptococcus thermophilus (strain CNRZ 1066).